We begin with the raw amino-acid sequence, 326 residues long: tRNA U34 carboxymethyltransferase (326 aa).

Carboxy-S-adenosyl-L-methionine is bound by residues Lys95, Trp109, Lys114, Gly134, 184–185 (VE), Tyr204, and Arg319.

This sequence belongs to the class I-like SAM-binding methyltransferase superfamily. CmoB family.

The enzyme catalyses carboxy-S-adenosyl-L-methionine + 5-hydroxyuridine(34) in tRNA = 5-carboxymethoxyuridine(34) in tRNA + S-adenosyl-L-homocysteine + H(+). In terms of biological role, catalyzes carboxymethyl transfer from carboxy-S-adenosyl-L-methionine (Cx-SAM) to 5-hydroxyuridine (ho5U) to form 5-carboxymethoxyuridine (cmo5U) at position 34 in tRNAs. This is tRNA U34 carboxymethyltransferase from Trichodesmium erythraeum (strain IMS101).